The primary structure comprises 179 residues: DNA utilization protein HofN (179 aa).

The helical transmembrane segment at L19 to I39 threads the bilayer.

It is found in the cell inner membrane. In terms of biological role, required for the use of extracellular DNA as a nutrient. This is DNA utilization protein HofN (hofN) from Escherichia coli (strain K12).